We begin with the raw amino-acid sequence, 85 residues long: Neurotoxin BmKAEP2 (85 aa).

Residues 1 to 21 form the signal peptide; it reads MKLFLLLVISASMLIDGLVNA. In terms of domain architecture, LCN-type CS-alpha/beta spans 22 to 82; that stretch reads DGYIRGSNGC…TWKSESNTCG (61 aa). 4 disulfide bridges follow: Cys31-Cys81, Cys35-Cys56, Cys42-Cys63, and Cys46-Cys65.

Belongs to the long (4 C-C) scorpion toxin superfamily. Sodium channel inhibitor family. Beta subfamily. In terms of tissue distribution, expressed by the venom gland.

It localises to the secreted. Depressant insect beta-toxins cause a transient contraction paralysis followed by a slow flaccid paralysis. They bind voltage-independently at site-4 of sodium channels (Nav) and shift the voltage of activation toward more negative potentials thereby affecting sodium channel activation and promoting spontaneous and repetitive firing. This toxin is active only on insects. Has potential anti-epilepsy effect. In Olivierus martensii (Manchurian scorpion), this protein is Neurotoxin BmKAEP2.